Reading from the N-terminus, the 482-residue chain is MISLPLTTPILPSRCLLHKTRRQNSTRRRLLIRSSSSLQDQFTVETTKRVVLVRHGQSTWNEEGRIQGSSDFSVLTKKGESQAEISRQMLIDDSFDVCFTSPLKRSKKTAEIIWGSRESEMIFDYDLREIDLYSFQGLLKKEGKEKFGEAFKQWQEDPANFIIDGHYPVRELWSRARSCWPGILAHESKSVLVVAHNAVNQALLATAIGLGTEYFRSLLQSNCGVSVLDFIPRADGGSPHVCLNRLNQTPNSPLAGGSSGGRKASKQIILVCHGQGNNEDSAVINQAANNDQAMNMLGVIHSQKTAELLLDLRVSSIVCSPKTASIESSGVISRVQEAAGCLGVDNVPHYVKTKQMNELDVESVLRKSNKDNDVIASQLDEEAFSALWNRSEKAWESLLDELSDEKSNPGEIMVVVGPAMTHISLIAQCLNLTKEALGLFHLDAGSISVIDFPDGPSSKGVIRCTNYTAHLGRWSIPITKPA.

A chloroplast-targeting transit peptide spans 1–34 (MISLPLTTPILPSRCLLHKTRRQNSTRRRLLIRS). The active-site Tele-phosphohistidine intermediate is the His55. The active-site Proton donor/acceptor is Glu129.

It belongs to the phosphoglycerate mutase family.

The protein resides in the plastid. It is found in the chloroplast stroma. The catalysed reaction is 2-carboxy-D-arabinitol 1-phosphate + H2O = 2-carboxy-D-arabinitol + phosphate. Phosphoglycerate mutase-like protein lacking PGM activity, but having 2-carboxy-D-arabinitol 1-phosphate (CA1P) phosphatase activity. Prevents the accumulation of D-glycero-2,3-pentodiulose-1,5-bisphosphate (PDBP) a potent inhibitor of ribulose-1,5-bisphosphate carboxylase (RuBisCO). PDBP is produced during the oxidation of ribulose-1,5-bisphosphate, the substrate of RuBisCO. The protein is Probable 2-carboxy-D-arabinitol-1-phosphatase of Arabidopsis thaliana (Mouse-ear cress).